A 362-amino-acid polypeptide reads, in one-letter code: Probable dual-specificity RNA methyltransferase RlmN (362 aa).

Glu-105 serves as the catalytic Proton acceptor. Residues 111-344 (HEYGNSICVT…VTIRREQGHD (234 aa)) enclose the Radical SAM core domain. Cysteines 118 and 349 form a disulfide. The [4Fe-4S] cluster site is built by Cys-125, Cys-129, and Cys-132. S-adenosyl-L-methionine contacts are provided by residues 175 to 176 (GE), Ser-207, 230 to 232 (SLH), and Asn-306. The S-methylcysteine intermediate role is filled by Cys-349.

Belongs to the radical SAM superfamily. RlmN family. It depends on [4Fe-4S] cluster as a cofactor.

The protein resides in the cytoplasm. The enzyme catalyses adenosine(2503) in 23S rRNA + 2 reduced [2Fe-2S]-[ferredoxin] + 2 S-adenosyl-L-methionine = 2-methyladenosine(2503) in 23S rRNA + 5'-deoxyadenosine + L-methionine + 2 oxidized [2Fe-2S]-[ferredoxin] + S-adenosyl-L-homocysteine. It catalyses the reaction adenosine(37) in tRNA + 2 reduced [2Fe-2S]-[ferredoxin] + 2 S-adenosyl-L-methionine = 2-methyladenosine(37) in tRNA + 5'-deoxyadenosine + L-methionine + 2 oxidized [2Fe-2S]-[ferredoxin] + S-adenosyl-L-homocysteine. Specifically methylates position 2 of adenine 2503 in 23S rRNA and position 2 of adenine 37 in tRNAs. The protein is Probable dual-specificity RNA methyltransferase RlmN of Bacillus cytotoxicus (strain DSM 22905 / CIP 110041 / 391-98 / NVH 391-98).